We begin with the raw amino-acid sequence, 392 residues long: [Phe13]-bombesin receptor (392 aa).

The Extracellular segment spans residues 1-40 (MPEGFQSLNQTLPSAISSIAHLESLNDSFILGAKQSEDVS). Residues asparagine 9 and asparagine 26 are each glycosylated (N-linked (GlcNAc...) asparagine). A helical transmembrane segment spans residues 41 to 62 (PGLEILALISVTYAVIISVGIL). The Cytoplasmic portion of the chain corresponds to 63–81 (GNTILIKVFFKIKSMQTVP). The helical transmembrane segment at 82 to 102 (NIFITSLAFGDLLLLLTCVPV) threads the bilayer. At 103 to 120 (DASRYIVDTWMFGRAGCK) the chain is on the extracellular side. Cysteine 119 and cysteine 202 form a disulfide bridge. Residues 121–142 (IISFIQLTSVGVSVFTLTVLSA) traverse the membrane as a helical segment. The Cytoplasmic segment spans residues 143–162 (DRYRAIVKPLQLQTSDAVLK). A helical membrane pass occupies residues 163–183 (TCGKAVCVWIISMLLAAPEAV). The Extracellular segment spans residues 184–219 (FSDLYEFGSSEKNTTFEACAPYPVSEKILQETHSLI). The chain crosses the membrane as a helical span at residues 220-240 (CFLVFYIVPLSIISAYYFLIA). The Cytoplasmic portion of the chain corresponds to 241–271 (KTLYKSTFNMPAEEHTHARKQIESRKRVAKT). A helical membrane pass occupies residues 272–292 (VLVLVALFAVCWLPNHMLYLY). The Extracellular portion of the chain corresponds to 293-312 (RSFTYHSAVNSSAFHLSATI). Residues 313–332 (FARVLAFSNSCVNPFALYWL) traverse the membrane as a helical segment. Topologically, residues 333-392 (SRSFRQHFKKQVYCCKTEPPASQQSPTHSSTITGITAVKGNIQMSEISITLLSAYDVKKE) are cytoplasmic. Cysteine 346 is lipidated: S-palmitoyl cysteine.

The protein belongs to the G-protein coupled receptor 1 family. In terms of tissue distribution, expressed only in brain, primarily in cortex and forebrain and at low levels in the midbrain.

It localises to the cell membrane. The relative rank potency of bombesin-like peptides for this receptor is [Phe13]bombesin &gt; [Leu13]bombesin &gt; GRP &gt; neuromedin-B. The polypeptide is [Phe13]-bombesin receptor (BB4) (Bombina orientalis (Oriental fire-bellied toad)).